A 103-amino-acid chain; its full sequence is Large ribosomal subunit protein uL24 (103 aa).

The protein belongs to the universal ribosomal protein uL24 family. As to quaternary structure, part of the 50S ribosomal subunit.

One of two assembly initiator proteins, it binds directly to the 5'-end of the 23S rRNA, where it nucleates assembly of the 50S subunit. Its function is as follows. One of the proteins that surrounds the polypeptide exit tunnel on the outside of the subunit. In Ruthia magnifica subsp. Calyptogena magnifica, this protein is Large ribosomal subunit protein uL24.